Reading from the N-terminus, the 424-residue chain is Adenylosuccinate synthetase (424 aa).

GTP is bound by residues Gly-12 to Lys-18 and Gly-40 to Thr-42. Catalysis depends on Asp-13, which acts as the Proton acceptor. Positions 13 and 40 each coordinate Mg(2+). IMP-binding positions include Asp-13 to Lys-16, Asn-38 to His-41, Thr-130, Arg-144, Asn-220, Thr-235, and Arg-299. The active-site Proton donor is His-41. Val-295–Arg-301 is a substrate binding site. GTP contacts are provided by residues Arg-301, Lys-327 to Asp-329, and Gly-412 to Gly-414.

This sequence belongs to the adenylosuccinate synthetase family. As to quaternary structure, homodimer. Requires Mg(2+) as cofactor.

It localises to the cytoplasm. It carries out the reaction IMP + L-aspartate + GTP = N(6)-(1,2-dicarboxyethyl)-AMP + GDP + phosphate + 2 H(+). It participates in purine metabolism; AMP biosynthesis via de novo pathway; AMP from IMP: step 1/2. Plays an important role in the de novo pathway and in the salvage pathway of purine nucleotide biosynthesis. Catalyzes the first committed step in the biosynthesis of AMP from IMP. This is Adenylosuccinate synthetase from Aspergillus niger (strain ATCC MYA-4892 / CBS 513.88 / FGSC A1513).